The primary structure comprises 80 residues: Cell division activator CedA (80 aa).

Belongs to the CedA family.

In terms of biological role, activates the cell division inhibited by chromosomal DNA over-replication. This chain is Cell division activator CedA, found in Escherichia coli O1:K1 / APEC.